The sequence spans 403 residues: Guanine nucleotide-binding protein alpha-8 subunit (403 aa).

Gly-2 carries N-myristoyl glycine lipidation. Cys-3 is lipidated: S-palmitoyl cysteine. The 326-residue stretch at Leu-31 to Leu-356 folds into the G-alpha domain. Residues Arg-34–Thr-47 form a G1 motif region. Residues Gly-39 to Ser-46, Ile-174 to Thr-180, Asp-199 to Gln-203, Asn-268 to Asp-271, and Ala-324 each bind GTP. Mg(2+) contacts are provided by Ser-46 and Thr-180. Residues Asp-172–Thr-180 form a G2 motif region. Residues Phe-195 to Arg-204 form a G3 motif region. The interval Phe-264–Asp-271 is G4 motif. Residues Ile-322–Lys-327 form a G5 motif region. The interval Thr-353–Ser-403 is disordered. A compositionally biased stretch (low complexity) spans Asn-374 to Asn-389. A compositionally biased stretch (polar residues) spans Gly-390–Ser-403.

The protein belongs to the G-alpha family. G proteins are composed of 3 units; alpha, beta and gamma. The alpha chain contains the guanine nucleotide binding site.

Functionally, guanine nucleotide-binding proteins (G proteins) are involved as modulators or transducers in various transmembrane signaling systems. G alpha-8 is a potential analog for the G(s)-like G-proteins which stimulate adenylate cyclase in mammals. The polypeptide is Guanine nucleotide-binding protein alpha-8 subunit (gpaH) (Dictyostelium discoideum (Social amoeba)).